The sequence spans 344 residues: Adenosine kinase (344 aa).

Residue Asp298 is part of the active site.

It belongs to the carbohydrate kinase PfkB family. Mg(2+) serves as cofactor.

The catalysed reaction is adenosine + ATP = AMP + ADP + H(+). The protein operates within purine metabolism; AMP biosynthesis via salvage pathway; AMP from adenosine: step 1/1. In Schizophyllum commune (Split gill fungus), this protein is Adenosine kinase (ADK).